A 465-amino-acid chain; its full sequence is Mitochondrial distribution and morphology protein 10 (465 aa).

Belongs to the MDM10 family. In terms of assembly, component of the ER-mitochondria encounter structure (ERMES) or MDM complex, composed of MMM1, MDM10, MDM12 and MDM34. Associates with the mitochondrial outer membrane sorting assembly machinery SAM(core) complex.

The protein localises to the mitochondrion outer membrane. Component of the ERMES/MDM complex, which serves as a molecular tether to connect the endoplasmic reticulum and mitochondria. Components of this complex are involved in the control of mitochondrial shape and protein biogenesis and may function in phospholipid exchange. MDM10 is involved in the late assembly steps of the general translocase of the mitochondrial outer membrane (TOM complex). Functions in the TOM40-specific route of the assembly of outer membrane beta-barrel proteins, including the association of TOM40 with the receptor TOM22 and small TOM proteins. Can associate with the SAM(core) complex as well as the MDM12-MMM1 complex, both involved in late steps of the major beta-barrel assembly pathway, that is responsible for biogenesis of all outer membrane beta-barrel proteins. May act as a switch that shuttles between both complexes and channels precursor proteins into the TOM40-specific pathway. Plays a role in mitochondrial morphology and in the inheritance of mitochondria. The polypeptide is Mitochondrial distribution and morphology protein 10 (Eremothecium gossypii (strain ATCC 10895 / CBS 109.51 / FGSC 9923 / NRRL Y-1056) (Yeast)).